The sequence spans 315 residues: 4-hydroxy-3-methylbut-2-enyl diphosphate reductase (315 aa).

A [4Fe-4S] cluster-binding site is contributed by Cys-12. Positions 41 and 74 each coordinate (2E)-4-hydroxy-3-methylbut-2-enyl diphosphate. Positions 41 and 74 each coordinate dimethylallyl diphosphate. The isopentenyl diphosphate site is built by His-41 and His-74. Residue Cys-96 coordinates [4Fe-4S] cluster. A (2E)-4-hydroxy-3-methylbut-2-enyl diphosphate-binding site is contributed by His-124. His-124 contacts dimethylallyl diphosphate. His-124 is a binding site for isopentenyl diphosphate. Glu-126 acts as the Proton donor in catalysis. (2E)-4-hydroxy-3-methylbut-2-enyl diphosphate is bound at residue Thr-168. Cys-198 contacts [4Fe-4S] cluster. (2E)-4-hydroxy-3-methylbut-2-enyl diphosphate-binding residues include Ser-226, Ser-227, Asn-228, and Ser-270. Positions 226, 227, 228, and 270 each coordinate dimethylallyl diphosphate. Isopentenyl diphosphate contacts are provided by Ser-226, Ser-227, Asn-228, and Ser-270.

It belongs to the IspH family. Requires [4Fe-4S] cluster as cofactor.

It carries out the reaction isopentenyl diphosphate + 2 oxidized [2Fe-2S]-[ferredoxin] + H2O = (2E)-4-hydroxy-3-methylbut-2-enyl diphosphate + 2 reduced [2Fe-2S]-[ferredoxin] + 2 H(+). It catalyses the reaction dimethylallyl diphosphate + 2 oxidized [2Fe-2S]-[ferredoxin] + H2O = (2E)-4-hydroxy-3-methylbut-2-enyl diphosphate + 2 reduced [2Fe-2S]-[ferredoxin] + 2 H(+). Its pathway is isoprenoid biosynthesis; dimethylallyl diphosphate biosynthesis; dimethylallyl diphosphate from (2E)-4-hydroxy-3-methylbutenyl diphosphate: step 1/1. The protein operates within isoprenoid biosynthesis; isopentenyl diphosphate biosynthesis via DXP pathway; isopentenyl diphosphate from 1-deoxy-D-xylulose 5-phosphate: step 6/6. Catalyzes the conversion of 1-hydroxy-2-methyl-2-(E)-butenyl 4-diphosphate (HMBPP) into a mixture of isopentenyl diphosphate (IPP) and dimethylallyl diphosphate (DMAPP). Acts in the terminal step of the DOXP/MEP pathway for isoprenoid precursor biosynthesis. This chain is 4-hydroxy-3-methylbut-2-enyl diphosphate reductase, found in Pseudomonas savastanoi pv. phaseolicola (strain 1448A / Race 6) (Pseudomonas syringae pv. phaseolicola (strain 1448A / Race 6)).